A 375-amino-acid polypeptide reads, in one-letter code: Acetylornithine aminotransferase (375 aa).

Residues 93-94 (GT) and phenylalanine 120 each bind pyridoxal 5'-phosphate. Arginine 123 lines the N(2)-acetyl-L-ornithine pocket. 205-208 (DEVQ) is a binding site for pyridoxal 5'-phosphate. Lysine 234 carries the post-translational modification N6-(pyridoxal phosphate)lysine. Position 262 (threonine 262) interacts with N(2)-acetyl-L-ornithine. Residue threonine 263 participates in pyridoxal 5'-phosphate binding.

It belongs to the class-III pyridoxal-phosphate-dependent aminotransferase family. ArgD subfamily. Homodimer. The cofactor is pyridoxal 5'-phosphate.

It localises to the cytoplasm. The enzyme catalyses N(2)-acetyl-L-ornithine + 2-oxoglutarate = N-acetyl-L-glutamate 5-semialdehyde + L-glutamate. It functions in the pathway amino-acid biosynthesis; L-arginine biosynthesis; N(2)-acetyl-L-ornithine from L-glutamate: step 4/4. In Staphylococcus epidermidis (strain ATCC 35984 / DSM 28319 / BCRC 17069 / CCUG 31568 / BM 3577 / RP62A), this protein is Acetylornithine aminotransferase.